The following is a 202-amino-acid chain: ATP-dependent Clp protease proteolytic subunit (202 aa).

Residue S101 is the Nucleophile of the active site. H126 is a catalytic residue.

It belongs to the peptidase S14 family. Component of the chloroplastic Clp protease core complex.

The protein resides in the plastid. Its subcellular location is the chloroplast stroma. It catalyses the reaction Hydrolysis of proteins to small peptides in the presence of ATP and magnesium. alpha-casein is the usual test substrate. In the absence of ATP, only oligopeptides shorter than five residues are hydrolyzed (such as succinyl-Leu-Tyr-|-NHMec, and Leu-Tyr-Leu-|-Tyr-Trp, in which cleavage of the -Tyr-|-Leu- and -Tyr-|-Trp bonds also occurs).. In terms of biological role, cleaves peptides in various proteins in a process that requires ATP hydrolysis. Has a chymotrypsin-like activity. Plays a major role in the degradation of misfolded proteins. The polypeptide is ATP-dependent Clp protease proteolytic subunit (Acorus gramineus (Dwarf sweet flag)).